The chain runs to 416 residues: Putative competence-damage inducible protein (416 aa).

It belongs to the CinA family.

In Geobacillus sp. (strain WCH70), this protein is Putative competence-damage inducible protein.